The primary structure comprises 528 residues: OLD nuclease (528 aa).

Residues methionine 1–glycine 153 form an ATPase domain N-terminus region. Glycine 31–threonine 35 contributes to the ATP binding site. The segment at serine 154 to aspartate 245 is dimerization domain. The ATPase domain C-terminus stretch occupies residues glutamate 246–phenylalanine 369. The toprim domain stretch occupies residues alanine 370–glutamate 528. A divalent metal cation-binding residues include glutamate 377, aspartate 381, aspartate 431, and aspartate 433. The disordered stretch occupies residues arginine 440 to glutamine 461. 2 residues coordinate a divalent metal cation: serine 478 and glutamate 480. Arginine 487 functions as the Stabilizes transition state or protonates leaving group in the catalytic mechanism.

The protein belongs to the class 1 OLD nuclease family. Homodimer. Mg(2+) is required as a cofactor. It depends on Mn(2+) as a cofactor. Ca(2+) serves as cofactor.

The enzyme catalyses Exonucleolytic cleavage in the 5'- to 3'-direction to yield nucleoside 5'-phosphates.. An exodeoxyribonuclease that degrades linear or supercoiled dsDNA from 5'-3'. Nicks and linearizes circular DNA. Activity is not stimulated by ATP or AMP-PNP, although it has DNA-stimulated ATPase activity. This chain is OLD nuclease, found in Thermus scotoductus (strain ATCC 700910 / SA-01).